The chain runs to 348 residues: Casein kinase II subunit alpha (348 aa).

A Protein kinase domain is found at 55–340 (YEIVRKIGRG…PLEAMEHPFF (286 aa)). ATP contacts are provided by residues 61-69 (IGRGKFSEV) and K84. D172 acts as the Proton acceptor in catalysis.

This sequence belongs to the protein kinase superfamily. Ser/Thr protein kinase family. CK2 subfamily. In terms of assembly, tetramer of two alpha and two beta chains.

The protein localises to the cytoplasm. It carries out the reaction L-seryl-[protein] + ATP = O-phospho-L-seryl-[protein] + ADP + H(+). It catalyses the reaction L-threonyl-[protein] + ATP = O-phospho-L-threonyl-[protein] + ADP + H(+). Functionally, casein kinases are operationally defined by their preferential utilization of acidic proteins such as caseins as substrates. The alpha chain contains the catalytic site. This Theileria annulata protein is Casein kinase II subunit alpha.